Consider the following 33-residue polypeptide: Protamine-2C (33 aa).

The segment at 1–33 (MPRRRRSSRRPVRRRRRPRVSRRRRRRGGRRRR) is disordered.

Testis.

The protein localises to the nucleus. It localises to the chromosome. Protamines substitute for histones in the chromatin of sperm during the haploid phase of spermatogenesis. They compact sperm DNA into a highly condensed, stable and inactive complex. This chain is Protamine-2C, found in Oncorhynchus mykiss (Rainbow trout).